The chain runs to 153 residues: Peptide deformylase (153 aa).

The Fe cation site is built by Cys87 and His129. Glu130 is an active-site residue. A Fe cation-binding site is contributed by His133.

Belongs to the polypeptide deformylase family. Fe(2+) serves as cofactor.

It carries out the reaction N-terminal N-formyl-L-methionyl-[peptide] + H2O = N-terminal L-methionyl-[peptide] + formate. Removes the formyl group from the N-terminal Met of newly synthesized proteins. Requires at least a dipeptide for an efficient rate of reaction. N-terminal L-methionine is a prerequisite for activity but the enzyme has broad specificity at other positions. In Dictyoglomus turgidum (strain DSM 6724 / Z-1310), this protein is Peptide deformylase.